A 340-amino-acid polypeptide reads, in one-letter code: 4-hydroxythreonine-4-phosphate dehydrogenase (340 aa).

Substrate-binding residues include histidine 141 and threonine 142. A divalent metal cation is bound by residues histidine 177, histidine 222, and histidine 277. Lysine 285, asparagine 294, and arginine 303 together coordinate substrate.

It belongs to the PdxA family. As to quaternary structure, homodimer. Zn(2+) is required as a cofactor. Requires Mg(2+) as cofactor. It depends on Co(2+) as a cofactor.

The protein localises to the cytoplasm. It carries out the reaction 4-(phosphooxy)-L-threonine + NAD(+) = 3-amino-2-oxopropyl phosphate + CO2 + NADH. The protein operates within cofactor biosynthesis; pyridoxine 5'-phosphate biosynthesis; pyridoxine 5'-phosphate from D-erythrose 4-phosphate: step 4/5. Functionally, catalyzes the NAD(P)-dependent oxidation of 4-(phosphooxy)-L-threonine (HTP) into 2-amino-3-oxo-4-(phosphooxy)butyric acid which spontaneously decarboxylates to form 3-amino-2-oxopropyl phosphate (AHAP). This is 4-hydroxythreonine-4-phosphate dehydrogenase from Maricaulis maris (strain MCS10) (Caulobacter maris).